The following is a 139-amino-acid chain: Large-conductance mechanosensitive channel (139 aa).

The next 2 helical transmembrane spans lie at valine 14 to leucine 34 and glycine 81 to valine 101.

The protein belongs to the MscL family. As to quaternary structure, homopentamer.

The protein resides in the cell membrane. Its function is as follows. Channel that opens in response to stretch forces in the membrane lipid bilayer. May participate in the regulation of osmotic pressure changes within the cell. The chain is Large-conductance mechanosensitive channel from Chloroflexus aurantiacus (strain ATCC 29366 / DSM 635 / J-10-fl).